A 305-amino-acid chain; its full sequence is UDP-3-O-acyl-N-acetylglucosamine deacetylase (305 aa).

Zn(2+)-binding residues include His78, His237, and Asp241. The active-site Proton donor is His264.

The protein belongs to the LpxC family. Requires Zn(2+) as cofactor.

It catalyses the reaction a UDP-3-O-[(3R)-3-hydroxyacyl]-N-acetyl-alpha-D-glucosamine + H2O = a UDP-3-O-[(3R)-3-hydroxyacyl]-alpha-D-glucosamine + acetate. It functions in the pathway glycolipid biosynthesis; lipid IV(A) biosynthesis; lipid IV(A) from (3R)-3-hydroxytetradecanoyl-[acyl-carrier-protein] and UDP-N-acetyl-alpha-D-glucosamine: step 2/6. Functionally, catalyzes the hydrolysis of UDP-3-O-myristoyl-N-acetylglucosamine to form UDP-3-O-myristoylglucosamine and acetate, the committed step in lipid A biosynthesis. The sequence is that of UDP-3-O-acyl-N-acetylglucosamine deacetylase from Cupriavidus necator (strain ATCC 17699 / DSM 428 / KCTC 22496 / NCIMB 10442 / H16 / Stanier 337) (Ralstonia eutropha).